The sequence spans 376 residues: Succinyl-diaminopimelate desuccinylase (376 aa).

A Zn(2+)-binding site is contributed by histidine 67. Aspartate 69 is a catalytic residue. Aspartate 100 is a binding site for Zn(2+). The active-site Proton acceptor is the glutamate 134. Glutamate 135, glutamate 163, and histidine 349 together coordinate Zn(2+).

It belongs to the peptidase M20A family. DapE subfamily. Homodimer. Zn(2+) is required as a cofactor. The cofactor is Co(2+).

The catalysed reaction is N-succinyl-(2S,6S)-2,6-diaminopimelate + H2O = (2S,6S)-2,6-diaminopimelate + succinate. It participates in amino-acid biosynthesis; L-lysine biosynthesis via DAP pathway; LL-2,6-diaminopimelate from (S)-tetrahydrodipicolinate (succinylase route): step 3/3. Its function is as follows. Catalyzes the hydrolysis of N-succinyl-L,L-diaminopimelic acid (SDAP), forming succinate and LL-2,6-diaminopimelate (DAP), an intermediate involved in the bacterial biosynthesis of lysine and meso-diaminopimelic acid, an essential component of bacterial cell walls. The polypeptide is Succinyl-diaminopimelate desuccinylase (Actinobacillus succinogenes (strain ATCC 55618 / DSM 22257 / CCUG 43843 / 130Z)).